A 349-amino-acid chain; its full sequence is Dihydroorotate dehydrogenase (quinone) (349 aa).

FMN-binding positions include 67-71 (AGLDK) and Thr91. Residue Lys71 participates in substrate binding. Residue 116-120 (NRLGF) coordinates substrate. Asn147 and Asn180 together coordinate FMN. Substrate is bound at residue Asn180. Ser183 (nucleophile) is an active-site residue. Position 185 (Asn185) interacts with substrate. The FMN site is built by Lys225 and Thr253. Substrate is bound at residue 254-255 (NT). FMN-binding positions include Gly276, Gly305, and 326–327 (YT).

Belongs to the dihydroorotate dehydrogenase family. Type 2 subfamily. In terms of assembly, monomer. The cofactor is FMN.

It is found in the cell membrane. The enzyme catalyses (S)-dihydroorotate + a quinone = orotate + a quinol. It functions in the pathway pyrimidine metabolism; UMP biosynthesis via de novo pathway; orotate from (S)-dihydroorotate (quinone route): step 1/1. In terms of biological role, catalyzes the conversion of dihydroorotate to orotate with quinone as electron acceptor. This is Dihydroorotate dehydrogenase (quinone) from Bordetella pertussis (strain Tohama I / ATCC BAA-589 / NCTC 13251).